The sequence spans 433 residues: uncharacterized protein (433 aa).

A signal peptide spans 1 to 28; that stretch reads MKICGLEKFRVFLSLISMVSLLCNGVNG. Topologically, residues 29-274 are extracellular; it reads FTIVRSMAVN…QAELEPKKTG (246 aa). The segment covering 235–250 has biased composition (polar residues); the sequence is GENANPTANSGTSARS. Positions 235 to 266 are disordered; it reads GENANPTANSGTSARSNRNEQNKMEEPARNQA. A compositionally biased stretch (basic and acidic residues) spans 251 to 266; it reads NRNEQNKMEEPARNQA. Residues 275-295 traverse the membrane as a helical segment; sequence VVVAGVTVSLAAGFVLALATL. Over 296 to 433 the chain is Cytoplasmic; it reads LLMKKKQTSL…HDKGTDEDKG (138 aa). Disordered regions lie at residues 320–340 and 413–433; these read EEPVDSAGRPEQTATESPSFD and KVIEKTSNENSHDKGTDEDKG.

As to expression, component of the acid-insoluble and acid-soluble organic matrix of the aragonitic skeleton (at protein level).

It is found in the membrane. This is an uncharacterized protein from Acropora millepora (Staghorn coral).